A 116-amino-acid polypeptide reads, in one-letter code: U11-theraphotoxin-Hhn1b (116 aa).

The signal sequence occupies residues 1 to 21; the sequence is MNTVRVTFLLVFVLAVSLGQA. The propeptide occupies 22–74; sequence DKDENRMEMQEKTEQGKSYLDFAENLLLQKLEELEAKLLEEDSEESRNSRQKR. The span at 60–69 shows a compositional bias: basic and acidic residues; that stretch reads LEEDSEESRN. Residues 60-83 form a disordered region; sequence LEEDSEESRNSRQKRCIGEGVPCD. Cystine bridges form between C75-C90, C82-C95, and C89-C110.

This sequence belongs to the neurotoxin 14 (magi-1) family. 01 (HNTX-16) subfamily. As to expression, expressed by the venom gland.

The protein localises to the secreted. Functionally, probable ion channel inhibitor. The chain is U11-theraphotoxin-Hhn1b from Cyriopagopus hainanus (Chinese bird spider).